A 363-amino-acid polypeptide reads, in one-letter code: S-adenosylmethionine:tRNA ribosyltransferase-isomerase (363 aa).

This sequence belongs to the QueA family. As to quaternary structure, monomer.

It localises to the cytoplasm. The catalysed reaction is 7-aminomethyl-7-carbaguanosine(34) in tRNA + S-adenosyl-L-methionine = epoxyqueuosine(34) in tRNA + adenine + L-methionine + 2 H(+). Its pathway is tRNA modification; tRNA-queuosine biosynthesis. Transfers and isomerizes the ribose moiety from AdoMet to the 7-aminomethyl group of 7-deazaguanine (preQ1-tRNA) to give epoxyqueuosine (oQ-tRNA). This Haemophilus influenzae (strain ATCC 51907 / DSM 11121 / KW20 / Rd) protein is S-adenosylmethionine:tRNA ribosyltransferase-isomerase.